A 129-amino-acid polypeptide reads, in one-letter code: Lysozyme C (129 aa).

In terms of domain architecture, C-type lysozyme spans 1–129 (KVYGRCELAA…VHAWIRGCRL (129 aa)). Disulfide bonds link C6-C127, C30-C115, C64-C80, and C76-C94. Residues E35 and D52 contribute to the active site.

This sequence belongs to the glycosyl hydrolase 22 family. Monomer.

The protein localises to the secreted. The catalysed reaction is Hydrolysis of (1-&gt;4)-beta-linkages between N-acetylmuramic acid and N-acetyl-D-glucosamine residues in a peptidoglycan and between N-acetyl-D-glucosamine residues in chitodextrins.. Functionally, lysozymes have primarily a bacteriolytic function; those in tissues and body fluids are associated with the monocyte-macrophage system and enhance the activity of immunoagents. The chain is Lysozyme C (LYZ) from Pavo cristatus (Indian peafowl).